A 444-amino-acid polypeptide reads, in one-letter code: Glutamate--tRNA ligase 1 (444 aa).

A 'HIGH' region motif is present at residues 7–17; sequence PSPTGYLHVGN. The short motif at 238 to 242 is the 'KMSKS' region element; sequence KISKR. Residue lysine 241 participates in ATP binding.

The protein belongs to the class-I aminoacyl-tRNA synthetase family. Glutamate--tRNA ligase type 1 subfamily. In terms of assembly, monomer.

It localises to the cytoplasm. It carries out the reaction tRNA(Glu) + L-glutamate + ATP = L-glutamyl-tRNA(Glu) + AMP + diphosphate. Its function is as follows. Catalyzes the attachment of glutamate to tRNA(Glu) in a two-step reaction: glutamate is first activated by ATP to form Glu-AMP and then transferred to the acceptor end of tRNA(Glu). The sequence is that of Glutamate--tRNA ligase 1 from Wolbachia pipientis subsp. Culex pipiens (strain wPip).